Consider the following 101-residue polypeptide: Interleukin-8 (101 aa).

The N-terminal stretch at 1 to 22 is a signal peptide; the sequence is MTSKLAVALLAAFLLSAALCEG. At R27 the chain carries Citrulline. 2 disulfide bridges follow: C34–C61 and C36–C77.

This sequence belongs to the intercrine alpha (chemokine CxC) family. Homodimer. Interacts with TNFAIP6 (via Link domain); this interaction interferes with chemokine binding to glycosaminoglycans. Post-translationally, citrullination at Arg-27 prevents proteolysis, and dampens tissue inflammation, it also enhances leukocytosis, possibly through impaired chemokine clearance from the blood circulation.

It localises to the secreted. Functionally, chemotactic factor that mediates inflammatory response by attracting neutrophils, basophils, and T-cells to clear pathogens and protect the host from infection. Also plays an important role in neutrophil activation. Released in response to an inflammatory stimulus, exerts its effect by binding to the G-protein-coupled receptors CXCR1 and CXCR2, primarily found in neutrophils, monocytes and endothelial cells. G-protein heterotrimer (alpha, beta, gamma subunits) constitutively binds to CXCR1/CXCR2 receptor and activation by IL8 leads to beta and gamma subunits release from Galpha (GNAI2 in neutrophils) and activation of several downstream signaling pathways including PI3K and MAPK pathways. In Macaca mulatta (Rhesus macaque), this protein is Interleukin-8 (CXCL8).